Reading from the N-terminus, the 637-residue chain is Sterol 3-beta-glucosyltransferase UGT80A2 (637 aa).

Disordered stretches follow at residues 1–29 (MPEISPAELAKVSSSSSSSSSSSSGRASV) and 66–112 (VAES…TERQ). Positions 13-24 (SSSSSSSSSSSS) are enriched in low complexity. The segment covering 67–79 (AESSGTGNKSFSR) has biased composition (polar residues). A compositionally biased stretch (basic and acidic residues) spans 103–112 (RLDKSKTERQ).

The protein belongs to the glycosyltransferase 28 family. Expressed in roots, cauline leaf epidermal cells, stomata, stamen, pollen and around the base of siliques.

It catalyses the reaction a sterol + UDP-alpha-D-glucose = a sterol 3-beta-D-glucoside + UDP + H(+). Involved in the biosynthesis of sterol glucosides. Catalyzes the synthesis of steryl glycosides (SGs) and acyl steryl glycosides (ASGs) which are the most abundant sterol derivatives in higher plants. Can act on several sterols like sitosterol, campesterol and stigmasterol. Both UGT80A2 and UGT80B1 are required for the normal production of SGs and ASGs in seeds. The sequence is that of Sterol 3-beta-glucosyltransferase UGT80A2 (UGT80A2) from Arabidopsis thaliana (Mouse-ear cress).